A 1174-amino-acid chain; its full sequence is PR domain zinc finger protein 15 (1174 aa).

Positions 75–185 constitute an SET domain; sequence SNLEIRRLDD…AGTELRVWYA (111 aa). Residues 252–307 are disordered; it reads LPAGGQQHEAASEKEPDAPRMEPPTAAESKSIQSVMVTKEPKKKPRRGRKPKASKV. A compositionally biased stretch (basic and acidic residues) spans 261–271; that stretch reads AASEKEPDAPR. Over residues 292–304 the composition is skewed to basic residues; sequence PKKKPRRGRKPKA. 2 consecutive C2H2-type zinc fingers follow at residues 402–424 and 434–457; these read HQCGTCSKVFQNSSNLSRHVRSH and FKCEECSKLFSRKESLKQHVSYKH. Residues 468-486 form a C2H2-type 3; degenerate zinc finger; it reads YRCGSCGKTFRMESALEFH. 2 consecutive C2H2-type zinc fingers follow at residues 495-517 and 522-544; these read FQCEMCFRFFSTNSNLSKHKKKH and FACEVCSKMFYRKDVMLDHQRRH. Lys-552 is covalently cross-linked (Glycyl lysine isopeptide (Lys-Gly) (interchain with G-Cter in SUMO2)). 2 consecutive C2H2-type zinc fingers follow at residues 571-593 and 598-620; these read SGCPVCGKVFSCRSNMNKHLLTH and YTCEICGRKFFRVDVLRDHIHVH. Positions 639-658 are disordered; it reads IGISSEENDDNSDESADSEP. Residues 644-655 show a composition bias toward acidic residues; that stretch reads EENDDNSDESAD. 8 C2H2-type zinc fingers span residues 661-684, 689-711, 725-747, 753-775, 781-803, 809-831, 837-859, and 865-888; these read YSCKRCQLTFGRGKEYLKHIMEVH, HGCSICHRRFALKATYHAHMVIH, HPCEICGRIFNSIGNLERHKLIH, HACEQCGKSFARKDMLKEHMRVH, YLCAECGKGMKTKHALRHHMKLH, YECKECHRKFAQKVNMLKHYKRH, FMCELCGKTFSERNTMETHKLIH, and WTCSVCDKKYVTEYMLQKHVQLTH. Disordered regions lie at residues 957–1007 and 1147–1174; these read AEGK…GDET and LQPPQAPAAPQQAVQPQVQNEQQQMYSY. Residues 962 to 973 are compositionally biased toward basic residues; that stretch reads GKAAKRSHKRKQ. Residues 1154–1174 show a composition bias toward low complexity; the sequence is AAPQQAVQPQVQNEQQQMYSY.

As to expression, expressed in embryonic stem cells (ESCs) (at protein level).

It localises to the nucleus. Its function is as follows. Sequence-specific DNA-binding transcriptional regulator. Plays a role as a molecular node in a transcriptional network regulating embryonic development and cell fate decision. Stimulates the expression of upstream key transcriptional activators and repressors of the Wnt/beta-catenin and MAPK/ERK pathways, respectively, that are essential for naive pluripotency and self-renewal maintenance of embryonic stem cells (ESCs). Specifically promotes SPRY1 and RSPO1 transcription activation through recognition and direct binding of a specific DNA sequence in their promoter regions. Also plays a role in induced pluripotent stem cells (iPSCs) reprogramming. Involved in early embryo development. This chain is PR domain zinc finger protein 15, found in Mus musculus (Mouse).